The sequence spans 204 residues: Inner membrane-spanning protein YciB (204 aa).

5 helical membrane passes run 48-68 (ILFATAIAILASVLQVGLYFF), 73-93 (FESMHLVTLGLVVVLGGATLM), 102-122 (WKPTVVNWLFGLAFLASQLFT), 147-167 (GAWIIFFLVSGLANLYVAYAF), and 170-190 (AVWVNFKLFGMLGLTLLFVVG).

It belongs to the YciB family.

It is found in the cell inner membrane. Its function is as follows. Plays a role in cell envelope biogenesis, maintenance of cell envelope integrity and membrane homeostasis. The sequence is that of Inner membrane-spanning protein YciB from Nitrosococcus oceani (strain ATCC 19707 / BCRC 17464 / JCM 30415 / NCIMB 11848 / C-107).